The primary structure comprises 309 residues: Neuropeptide-like 1 (309 aa).

The first 28 residues, M1–P28, serve as a signal peptide directing secretion. Positions R29–D99 are excised as a propeptide. The disordered stretch occupies residues G126 to E147. Acidic residues predominate over residues P133–E144. A Tyrosine amide modification is found at Y164. An Asparagine amide modification is found at N182.

As to expression, MTYamide peptide: Expressed in the larval CNS (at protein level). NAP peptide: Expressed in the larval CNS (at protein level). IPNamide peptide: Expressed in the ventral ganglion of the third larval instar and adult brain (at protein level).

It is found in the secreted. In terms of biological role, acts as a ligand for the receptor-type guanylate cyclase Gyc76C. Stimulates Gyc76c-dependent cGMP production and modulates the IMD innate immune pathway in response to salt stress by inducing nuclear translocation of NF-kappa-B protein Rel which leads to increased expression of the antimicrobial peptide diptericin. Does not appear to play a role in Gyc76C-mediated wing development. This is Neuropeptide-like 1 (Nplp1) from Drosophila melanogaster (Fruit fly).